Consider the following 92-residue polypeptide: Small ribosomal subunit protein uS19c (92 aa).

It belongs to the universal ribosomal protein uS19 family.

It is found in the plastid. Its subcellular location is the chloroplast. Functionally, protein S19 forms a complex with S13 that binds strongly to the 16S ribosomal RNA. This is Small ribosomal subunit protein uS19c from Pyropia yezoensis (Susabi-nori).